A 172-amino-acid chain; its full sequence is Small ribosomal subunit protein uS5 (172 aa).

One can recognise an S5 DRBM domain in the interval 16-79; it reads LKEKLVHINR…EDGKKNVVKV (64 aa).

This sequence belongs to the universal ribosomal protein uS5 family. Part of the 30S ribosomal subunit. Contacts proteins S4 and S8.

With S4 and S12 plays an important role in translational accuracy. In terms of biological role, located at the back of the 30S subunit body where it stabilizes the conformation of the head with respect to the body. This chain is Small ribosomal subunit protein uS5, found in Prosthecochloris aestuarii (strain DSM 271 / SK 413).